A 467-amino-acid chain; its full sequence is Venom prothrombin activator pseutarin-C catalytic subunit (467 aa).

Positions 1–22 (MAPQLLLCLILTFLWSLPEAES) are cleaved as a signal peptide. The propeptide occupies 23–40 (NVFLKSKVANRFLQRTKR). The Gla domain maps to 41–86 (ANSLVEEFKSGNIERECIEERCSKEEAREVFEDDEKTETFWNVYVD). A 4-carboxyglutamate mark is found at Glu46, Glu47, Glu54, Glu56, Glu59, Glu60, Glu65, Glu66, Glu69, and Glu72. Cys57 and Cys62 form a disulfide bridge. The 37-residue stretch at 86–122 (DGDQCSSNPCHYRGICKDGIGSYTCTCLSGYEGKNCE) folds into the EGF-like 1; calcium-binding domain. Cystine bridges form between Cys90-Cys101, Cys95-Cys110, Cys112-Cys121, Cys129-Cys140, Cys136-Cys149, Cys151-Cys164, Cys172-Cys329, Cys216-Cys221, Cys236-Cys252, Cys377-Cys391, and Cys402-Cys430. O-linked (Hex...) serine glycosylation is present at Ser92. The EGF-like 2 domain maps to 129–164 (CRVDNGNCWHFCKSVQNDIQCSCAEGYLLGEDGHSC). The propeptide at 182–209 (REASLPDFVQSHNATLLKKSDNPSPDIR) is activation peptide. Residues 210 to 454 (IVNGMDCKLG…FIPWIKRIMR (245 aa)) enclose the Peptidase S1 domain. His251 acts as the Charge relay system in catalysis. Asn254 carries an N-linked (GlcNAc...) asparagine glycan. Catalysis depends on Asp309, which acts as the Charge relay system. The active-site Charge relay system is the Ser406.

Belongs to the peptidase S1 family. Snake venom subfamily. In terms of assembly, heterodimer of a light and a heavy chains; disulfide-linked. Is associated with pseutarin-C non-catalytic subunit (AC Q7SZN0) in a non-covalent manner. Post-translationally, gamma-carboxyglutamate residues are formed by vitamin K dependent carboxylation. These residues are essential for the binding of calcium. Expressed by the venom gland.

The protein localises to the secreted. It catalyses the reaction Selective cleavage of Arg-|-Thr and then Arg-|-Ile bonds in prothrombin to form thrombin.. With respect to regulation, activated by calcium and negatively charged phospholipids. Its function is as follows. Snake prothrombin activator that attacks the hemostatic system of prey. This non-catalytic subunit is functionally similar to blood coagulation factor V. It serves as a critical cofactor for the prothrombinase activity of the catalytic subunit, which is similar to the blood coagulation factor X. The complex converts prothrombin to thrombin by sequential cleavage at two positions, Arg-320 followed by Arg-271. Cleavage at Arg-320 produces an active intermediate known as meizothrombin. Meizothrombin is the 'second' substrate for prothrombinase, and it docks in an altered manner to present the second cleavage site (271). Cleavage at Arg-271 releases active thrombin from its pro-fragment. This order of events is reversed if the protease component of prothrombinase is used on its own, suggesting that the 271 site is inherently more accessible to proteolysis. The complex converts prothrombin to thrombin in presence but also in the absence of membrane. The protein is Venom prothrombin activator pseutarin-C catalytic subunit of Pseudonaja textilis (Eastern brown snake).